The following is a 330-amino-acid chain: G-protein coupled bile acid receptor 1 (330 aa).

Topologically, residues 1–19 (MTPNSTGEVPGPIPRGALE) are extracellular. A glycan (N-linked (GlcNAc...) asparagine) is linked at Asn-4. The helical transmembrane segment at 20-40 (LSLALASLIIAANLLLALGIA) threads the bilayer. Residues 41–50 (CDRRLRSPPA) lie on the Cytoplasmic side of the membrane. A helical transmembrane segment spans residues 51-71 (GCFFLSLLLAGLLTGLALPTL). At 72–85 (PGLWRQSHRGYWSC) the chain is on the extracellular side. A disulfide bridge links Cys-85 with Cys-155. The helical transmembrane segment at 86–106 (LLVYLAPNFSFLSLLANLLLV) threads the bilayer. Topologically, residues 107-125 (HGERYVAVLRPLQPPGSIR) are cytoplasmic. A helical membrane pass occupies residues 126–146 (LALLLTWTGPLLFASLPALGW). The Extracellular segment spans residues 147–169 (NHWGPEANCSSQTIFPAPYLYLE). N-linked (GlcNAc...) asparagine glycosylation occurs at Asn-154. A helical membrane pass occupies residues 170–190 (VYGLLLPAVGAAALLSAHVLL). At 191–230 (AAHRQLQDIRRLERAVCRDAPSALARALTWRQARAQAGAT) the chain is on the cytoplasmic side. A helical membrane pass occupies residues 231–251 (LLFGLCWGPYVATLFLSVLAY). Topologically, residues 252-261 (EQRPPLGPGT) are extracellular. Residues 262–282 (LLSLLSLGSASAAAVPVAMGL) traverse the membrane as a helical segment. The Cytoplasmic portion of the chain corresponds to 283–330 (GDHRYTAPWRAAARRWLRGLRGRGSQASPGPSTAYHTSSQSSVDVDLN). Residues 304–330 (GRGSQASPGPSTAYHTSSQSSVDVDLN) form a disordered region. The segment covering 307–330 (SQASPGPSTAYHTSSQSSVDVDLN) has biased composition (polar residues).

It belongs to the G-protein coupled receptor 1 family. As to expression, expressed at high level in spleen. Expressed at lower level in thymus, heart, lung, liver, kidney, ileum, blood and adherent alveolar macrophage cells.

The protein resides in the cell membrane. Functionally, receptor for bile acid. Bile-acid binding induces its internalization, activation of extracellular signal-regulated kinase and intracellular cAMP production. May be involved in the suppression of macrophage functions by bile acids. Involved in bile acid promoted GLP1R secretion. The chain is G-protein coupled bile acid receptor 1 (GPBAR1) from Oryctolagus cuniculus (Rabbit).